Consider the following 279-residue polypeptide: Protease HtpX homolog (279 aa).

The next 2 membrane-spanning stretches (helical) occupy residues 4–24 (IFLF…VLAV) and 34–54 (GSLL…SLLM). Residue histidine 140 coordinates Zn(2+). The active site involves glutamate 141. Histidine 144 contributes to the Zn(2+) binding site. The next 2 membrane-spanning stretches (helical) occupy residues 155 to 175 (LIQG…ANLI) and 189 to 209 (FLVS…IVMW). Glutamate 215 is a binding site for Zn(2+).

It belongs to the peptidase M48B family. The cofactor is Zn(2+).

Its subcellular location is the cell inner membrane. This chain is Protease HtpX homolog, found in Neisseria meningitidis serogroup B (strain ATCC BAA-335 / MC58).